Here is a 28-residue protein sequence, read N- to C-terminus: Ranatuerin-2AVb (28 aa).

Cysteines 23 and 28 form a disulfide.

As to expression, expressed by the skin glands.

It localises to the secreted. In terms of biological role, has antibacterial activity. In Rana arvalis (Moor frog), this protein is Ranatuerin-2AVb.